The following is a 182-amino-acid chain: Adenine phosphoribosyltransferase (182 aa).

Belongs to the purine/pyrimidine phosphoribosyltransferase family. In terms of assembly, homodimer.

The protein resides in the cytoplasm. It catalyses the reaction AMP + diphosphate = 5-phospho-alpha-D-ribose 1-diphosphate + adenine. Its pathway is purine metabolism; AMP biosynthesis via salvage pathway; AMP from adenine: step 1/1. Its function is as follows. Catalyzes a salvage reaction resulting in the formation of AMP, that is energically less costly than de novo synthesis. The chain is Adenine phosphoribosyltransferase from Saccharopolyspora erythraea (strain ATCC 11635 / DSM 40517 / JCM 4748 / NBRC 13426 / NCIMB 8594 / NRRL 2338).